The sequence spans 291 residues: Protease HtpX (291 aa).

A run of 2 helical transmembrane segments spans residues Ile4–Ile24 and Leu36–Leu56. Zn(2+) is bound at residue His143. Residue Glu144 is part of the active site. His147 serves as a coordination point for Zn(2+). 2 helical membrane-spanning segments follow: residues Gly151–Ser171 and Phe199–Trp219. Glu225 is a binding site for Zn(2+).

This sequence belongs to the peptidase M48B family. Zn(2+) serves as cofactor.

It is found in the cell inner membrane. This chain is Protease HtpX, found in Aliivibrio salmonicida (strain LFI1238) (Vibrio salmonicida (strain LFI1238)).